The chain runs to 554 residues: MTPLIFVTGGVVSSLGKGIAAASLASILEARGLKVTMVKLDPYINVDPGTMSPFQHGEVYVTDDGAETDLDLGHYERFVRTRLSRKNSVTTGRIYQNVICKERRGDYLGATVQVIPHITDEIRRCIDEATASFDVALVEIGGTVGDIESLPFLEAIRQVRIERGAERTMFMHLTLVPYIAAAGELKTKPTQHSVKELRSIGIQPDVLLCRSEQVIPDSERRKIALFTNVSERAVIGCPDIDVLYGMPLELRRQGLDEIVIDQFKLSGTTSLADLSEWEDVVDAIKHPLDEVTIAVVGKYVDYRDAYKSVGEALKHGGLRQRTKVNLKWVEAQDLEGSDMAALKDIDGILVPGGFGDRGFEGKVLASRYAREQRVPYFGICYGMQAAVVDYARHVAGLEGANSTENDRQSSHPVIALITEWRTTTGEVERRDEKSDLGGTMRLGLQEQRLKAGTLARELYGRDVVGERHRHRYEFNNRYRTQLEDAGLVIAAKSMDDTLVEMIELPREMHPWFLACQAHPEFLSTPRDGHPLFIGFVKASRARKAGGKLLREVCV.

Residues 1-265 form an amidoligase domain region; that stretch reads MTPLIFVTGG…DEIVIDQFKL (265 aa). Serine 13 is a CTP binding site. A UTP-binding site is contributed by serine 13. ATP-binding positions include 14–19 and aspartate 71; that span reads SLGKGI. Residues aspartate 71 and glutamate 139 each contribute to the Mg(2+) site. Residues 146 to 148, 186 to 191, and lysine 222 contribute to the CTP site; these read DIE and KTKPTQ. UTP is bound by residues 186–191 and lysine 222; that span reads KTKPTQ. One can recognise a Glutamine amidotransferase type-1 domain in the interval 292–545; the sequence is TIAVVGKYVD…VKASRARKAG (254 aa). Glycine 353 provides a ligand contact to L-glutamine. Cysteine 380 functions as the Nucleophile; for glutamine hydrolysis in the catalytic mechanism. L-glutamine contacts are provided by residues 381-384, glutamate 404, and arginine 471; that span reads YGMQ. Active-site residues include histidine 518 and glutamate 520.

This sequence belongs to the CTP synthase family. In terms of assembly, homotetramer.

It catalyses the reaction UTP + L-glutamine + ATP + H2O = CTP + L-glutamate + ADP + phosphate + 2 H(+). The enzyme catalyses L-glutamine + H2O = L-glutamate + NH4(+). The catalysed reaction is UTP + NH4(+) + ATP = CTP + ADP + phosphate + 2 H(+). It participates in pyrimidine metabolism; CTP biosynthesis via de novo pathway; CTP from UDP: step 2/2. With respect to regulation, allosterically activated by GTP, when glutamine is the substrate; GTP has no effect on the reaction when ammonia is the substrate. The allosteric effector GTP functions by stabilizing the protein conformation that binds the tetrahedral intermediate(s) formed during glutamine hydrolysis. Inhibited by the product CTP, via allosteric rather than competitive inhibition. In terms of biological role, catalyzes the ATP-dependent amination of UTP to CTP with either L-glutamine or ammonia as the source of nitrogen. Regulates intracellular CTP levels through interactions with the four ribonucleotide triphosphates. This Xylella fastidiosa (strain M12) protein is CTP synthase.